The chain runs to 150 residues: S-protein homolog 28 (150 aa).

The N-linked (GlcNAc...) asparagine glycan is linked to Asn122.

This sequence belongs to the plant self-incompatibility (S1) protein family.

It localises to the secreted. This Arabidopsis thaliana (Mouse-ear cress) protein is S-protein homolog 28.